Consider the following 713-residue polypeptide: Forkhead box protein P2 (713 aa).

Over residues 1-28 the composition is skewed to polar residues; it reads MMQESATETISNSSMNQNGMSTLSSQLD. Disordered stretches follow at residues 1–45 and 279–337; these read MMQE…SEVS and DNGI…TGAS. The segment covering 290-303 has biased composition (low complexity); the sequence is TTNNSSSTTSSTTS. A compositionally biased stretch (polar residues) spans 313–322; the sequence is SIVNGQSSVL. The span at 324–335 shows a compositional bias: basic and acidic residues; the sequence is ARRDSSSHEETG. The segment at 344-369 adopts a C2H2-type zinc-finger fold; it reads GVCKWPGCESICEDFGQFLKHLNNEH. Residues 386–407 form a leucine-zipper region; the sequence is VQQLEIQLSKERERLQAMMTHL. Residues 420-424 are CTBP1-binding; sequence PLNLV. The segment covering 436–457 has biased composition (low complexity); it reads TSPQSLPQTPTTPTAPVTPITQ. The tract at residues 436 to 463 is disordered; sequence TSPQSLPQTPTTPTAPVTPITQGPSVIT. The fork-head DNA-binding region spans 502-592; it reads RPPFTYATLI…SQKITGSPTL (91 aa). Disordered stretches follow at residues 647–666 and 676–713; these read LDHI…QPHI and VIAE…EDLE. The segment covering 697–713 has biased composition (acidic residues); it reads LEDDREIEEEPLSEDLE.

As to quaternary structure, forms homodimers and heterodimers with FOXP1 and FOXP4. Dimerization is required for DNA-binding. Interacts with CTBP1. Interacts with FOXP1. Interacts with TBR1. Interacts with ZMYM2.

Its subcellular location is the nucleus. Functionally, transcriptional repressor that may play a role in the specification and differentiation of lung epithelium. May also play a role in developing neural, gastrointestinal and cardiovascular tissues. Can act with CTBP1 to synergistically repress transcription but CTPBP1 is not essential. Plays a role in synapse formation by regulating SRPX2 levels. This is Forkhead box protein P2 (FOXP2) from Hylobates lar (Lar gibbon).